A 192-amino-acid polypeptide reads, in one-letter code: Small ribosomal subunit protein uS4c-2 (192 aa).

In terms of domain architecture, S4 RNA-binding spans 91 to 155 (TRLDHLVYRA…PKPPEYLPPY (65 aa)).

Belongs to the universal ribosomal protein uS4 family. In terms of assembly, part of the 30S ribosomal subunit. Contacts protein S5. The interaction surface between S4 and S5 is involved in control of translational fidelity.

The protein resides in the plastid. The protein localises to the chloroplast. One of the primary rRNA binding proteins, it binds directly to 16S rRNA where it nucleates assembly of the body of the 30S subunit. Its function is as follows. With S5 and S12 plays an important role in translational accuracy. The protein is Small ribosomal subunit protein uS4c-2 of Cyanidium caldarium (Red alga).